We begin with the raw amino-acid sequence, 492 residues long: Catalase isozyme B (492 aa).

Residues 1-20 (MDPYKHRPSSGSNSTFWTTN) are disordered. Residues 9-20 (SSGSNSTFWTTN) are compositionally biased toward polar residues. Arg62 provides a ligand contact to heme. His65 is an active-site residue. Arg102 provides a ligand contact to heme. The active site involves Asn138. A heme-binding site is contributed by Phe151. At Tyr210 the chain carries Phosphotyrosine. Positions 325–348 (CPAIIVPGIHYSDDKLLQTRIFSY) form a cross-link, 3-(S-cysteinyl)-tyrosine (Cys-Tyr). 3 residues coordinate heme: Arg344, Tyr348, and Arg355. The Peroxisome targeting signal motif lies at 484-492 (SRLNLKPNM).

This sequence belongs to the catalase family. In terms of assembly, homotetramer. Interacts with GLO1 and GLO4; these interactions are disturbed by alpha-hydroxy-2-pyridinemethanesulfonic acid (HPMS) and salicylic acid (SA). Interacts with STRK1 at the plasma membrane. Requires heme as cofactor. As to expression, predominantly expressed in roots and, at low levels, in leaves (e.g. sheaths). Detected in seeds. Also present in panicles and culms. Observed in stems and anthers.

The protein resides in the peroxisome. Its subcellular location is the glyoxysome. It is found in the cell membrane. It carries out the reaction 2 H2O2 = O2 + 2 H2O. Its activity is regulated as follows. Strongly inhibited by beta-mercaptoethanol, sodium azide and potassium cyanide. Slightly repressed by 3-amino-1,2,4-triazole (3-AT). Activity is repressed proportionally to increased concentration of NaCl, KCl, LiCl and MgCl(2). Functionally, occurs in almost all aerobically respiring organisms and serves to protect cells from the toxic effects of hydrogen peroxide. May prevent the excessive accumulation of H(2)O(2) during water stress in response to the accumulation of abscisic acid (ABA). Involved in the modulation of ROS levels related to root growth regulation. Required for pollen viability and floret fertility upon heat stress (HS) by detoxifying reactive oxygen species (ROS) and malondialdehyde (MDA) accumulation in developing anthers exposed to HS. This chain is Catalase isozyme B (CATB), found in Oryza sativa subsp. japonica (Rice).